Reading from the N-terminus, the 120-residue chain is Histone H3-like centromeric protein cnp1 (120 aa).

A disordered region spans residues 1-26; the sequence is MAKKSLMAEPGDPIPRPRKKRYRPGT. The segment at 14-120 is H3-like; it reads IPRPRKKRYR…MQLARRIRGA (107 aa).

Belongs to the histone H3 family. Component of centromeric nucleosomes, where DNA is wrapped around a histone octamer core. The octamer contains two molecules each of H2A, H2B, cnp1/CENPA and H4 assembled in one cnp1-H4 heterotetramer and two H2A-H2B heterodimers. Interacts with the inner kinetochore. Component of centromeric nucleosomes. Interacts with mis6. Interacts with sim4. Ubiquitinated. Is degraded through ubiquitin-mediated proteolysis when not protected by its association to the kinetochore.

The protein resides in the nucleus. The protein localises to the chromosome. Its subcellular location is the centromere. Its function is as follows. Histone H3-like nucleosomal protein that is specifically found in centromeric nucleosomes. Replaces conventional H3 in the nucleosome core of centromeric chromatin that serves as an assembly site for the inner kinetochore. Required for recruitment and assembly of kinetochore proteins, mitotic progression and chromosome segregation. May serve as an epigenetic mark that propagates centromere identity through replication and cell division. The chain is Histone H3-like centromeric protein cnp1 (cnp1) from Schizosaccharomyces pombe (strain 972 / ATCC 24843) (Fission yeast).